The chain runs to 250 residues: NH(3)-dependent NAD(+) synthetase (250 aa).

31-38 serves as a coordination point for ATP; the sequence is GISGGIDS. Mg(2+) is bound at residue aspartate 37. Residue arginine 122 coordinates deamido-NAD(+). Residue threonine 142 coordinates ATP. Glutamate 147 contributes to the Mg(2+) binding site. Residues lysine 155 and aspartate 162 each contribute to the deamido-NAD(+) site. ATP contacts are provided by lysine 171 and serine 193. 239–240 is a deamido-NAD(+) binding site; that stretch reads HK.

Belongs to the NAD synthetase family. As to quaternary structure, homodimer.

The catalysed reaction is deamido-NAD(+) + NH4(+) + ATP = AMP + diphosphate + NAD(+) + H(+). Its pathway is cofactor biosynthesis; NAD(+) biosynthesis; NAD(+) from deamido-NAD(+) (ammonia route): step 1/1. In terms of biological role, catalyzes the ATP-dependent amidation of deamido-NAD to form NAD. Uses ammonia as a nitrogen source. This chain is NH(3)-dependent NAD(+) synthetase, found in Alkaliphilus oremlandii (strain OhILAs) (Clostridium oremlandii (strain OhILAs)).